Here is a 104-residue protein sequence, read N- to C-terminus: Large ribosomal subunit protein uL23 (104 aa).

It belongs to the universal ribosomal protein uL23 family. In terms of assembly, part of the 50S ribosomal subunit. Contacts protein L29, and trigger factor when it is bound to the ribosome.

One of the early assembly proteins it binds 23S rRNA. One of the proteins that surrounds the polypeptide exit tunnel on the outside of the ribosome. Forms the main docking site for trigger factor binding to the ribosome. The sequence is that of Large ribosomal subunit protein uL23 from Leptospira borgpetersenii serovar Hardjo-bovis (strain JB197).